We begin with the raw amino-acid sequence, 237 residues long: Ribosomal RNA small subunit methyltransferase G (237 aa).

S-adenosyl-L-methionine-binding positions include glycine 78, phenylalanine 83, 129–130 (AE), and arginine 148. The segment at 216–237 (SKKKETPNKYPRKAGTPNKKPL) is disordered.

The protein belongs to the methyltransferase superfamily. RNA methyltransferase RsmG family.

The protein resides in the cytoplasm. In terms of biological role, specifically methylates the N7 position of a guanine in 16S rRNA. The polypeptide is Ribosomal RNA small subunit methyltransferase G (Streptococcus agalactiae serotype III (strain NEM316)).